The chain runs to 234 residues: Thiamine import ATP-binding protein ThiQ (234 aa).

Residues 2–230 (LRFSDVKYRY…EKPPELTQYL (229 aa)) form the ABC transporter domain. 32–39 (GPSGAGKS) contacts ATP.

Belongs to the ABC transporter superfamily. Thiamine importer (TC 3.A.1.19.1) family. In terms of assembly, the complex is composed of two ATP-binding proteins (ThiQ), two transmembrane proteins (ThiP) and a solute-binding protein (ThiB).

Its subcellular location is the cell inner membrane. The catalysed reaction is thiamine(out) + ATP + H2O = thiamine(in) + ADP + phosphate + H(+). Its function is as follows. Part of the ABC transporter complex ThiBPQ involved in thiamine import. Responsible for energy coupling to the transport system. This is Thiamine import ATP-binding protein ThiQ from Aliivibrio fischeri (strain ATCC 700601 / ES114) (Vibrio fischeri).